A 1368-amino-acid chain; its full sequence is DNA-directed RNA polymerase subunit beta (1368 aa).

This sequence belongs to the RNA polymerase beta chain family. The RNAP catalytic core consists of 2 alpha, 1 beta, 1 beta' and 1 omega subunit. When a sigma factor is associated with the core the holoenzyme is formed, which can initiate transcription.

It carries out the reaction RNA(n) + a ribonucleoside 5'-triphosphate = RNA(n+1) + diphosphate. DNA-dependent RNA polymerase catalyzes the transcription of DNA into RNA using the four ribonucleoside triphosphates as substrates. The chain is DNA-directed RNA polymerase subunit beta from Burkholderia mallei (strain SAVP1).